The sequence spans 445 residues: Protein kinase C and casein kinase substrate in neurons protein 1 (445 aa).

The region spanning 12–282 (DETTDSFWEV…TIVSASAQED (271 aa)) is the F-BAR domain. Coiled-coil stretches lie at residues 146 to 167 (AKKLKELETAKKTYHMACKEEK) and 183 to 219 (TTDQQKKLQEKVDKCKNDVQKAKEKYEKSLDELNKCT). Residues 327 to 390 (LTQVTHGAEH…PFEEDSKGVR (64 aa)) form a disordered region. 2 stretches are compositionally biased toward polar residues: residues 338–358 (TPQTGDRGSVSSYEKNQQYSA) and 368–379 (TAAQSASETNGG). The region spanning 386–445 (SKGVRVRALYDYEGQEQDELTFKAGDELTKLEDEDEQGWCKGRLDSGQLGLYPANYVEPV) is the SH3 domain.

In terms of assembly, interacts with cobl.

The protein resides in the cytoplasm. The protein localises to the cytosol. Its subcellular location is the cell membrane. It localises to the cell projection. It is found in the synapse. The protein resides in the synaptosome. The protein localises to the cytoplasmic vesicle membrane. Its subcellular location is the ruffle membrane. It localises to the membrane. Its function is as follows. Binds to membranes via its F-BAR domain and mediates membrane tubulation. Plays a role in cellular transport processes by recruiting dynamins to membranes. Plays a role in the reorganization of the actin cytoskeleton and in neuron morphogenesis via its interaction with cobl, and by recruiting cobl to the cell cortex. Plays a role in the regulation of neurite formation, neurite branching and the regulation of neurite length. Required for normal synaptic vesicle endocytosis; this process retrieves previously released neurotransmitters to accommodate multiple cycles of neurotransmission. Required for normal excitatory and inhibitory synaptic transmission. Required for normal embryonic development, including normal development of laterality, normal body size and shape, as well as normal brain and heart development. Required for normal development of stereocilia and kinocilia in sensory hair cells of neuromasts in the posterior lateral line organ, and thus also for balance keeping and normal swimming behavior. This Danio rerio (Zebrafish) protein is Protein kinase C and casein kinase substrate in neurons protein 1 (pacsin1b).